The primary structure comprises 316 residues: Biotin synthase (316 aa).

Residues 36-264 form the Radical SAM core domain; the sequence is TEIQISTLLS…ASRVRLAAGR (229 aa). Cysteine 51, cysteine 55, and cysteine 58 together coordinate [4Fe-4S] cluster. 4 residues coordinate [2Fe-2S] cluster: cysteine 96, cysteine 127, cysteine 187, and arginine 259.

Belongs to the radical SAM superfamily. Biotin synthase family. In terms of assembly, homodimer. [4Fe-4S] cluster serves as cofactor. [2Fe-2S] cluster is required as a cofactor.

The catalysed reaction is (4R,5S)-dethiobiotin + (sulfur carrier)-SH + 2 reduced [2Fe-2S]-[ferredoxin] + 2 S-adenosyl-L-methionine = (sulfur carrier)-H + biotin + 2 5'-deoxyadenosine + 2 L-methionine + 2 oxidized [2Fe-2S]-[ferredoxin]. The protein operates within cofactor biosynthesis; biotin biosynthesis; biotin from 7,8-diaminononanoate: step 2/2. Its function is as follows. Catalyzes the conversion of dethiobiotin (DTB) to biotin by the insertion of a sulfur atom into dethiobiotin via a radical-based mechanism. The protein is Biotin synthase of Gluconacetobacter diazotrophicus (strain ATCC 49037 / DSM 5601 / CCUG 37298 / CIP 103539 / LMG 7603 / PAl5).